The following is a 139-amino-acid chain: Large ribosomal subunit protein uL16 (139 aa).

A compositionally biased stretch (basic residues) spans 1–11; that stretch reads MLQPKRTKYRK. The interval 1–30 is disordered; it reads MLQPKRTKYRKPFLQSHDKRKAHKGNKVSF.

Belongs to the universal ribosomal protein uL16 family. As to quaternary structure, part of the 50S ribosomal subunit.

Functionally, binds 23S rRNA and is also seen to make contacts with the A and possibly P site tRNAs. The polypeptide is Large ribosomal subunit protein uL16 (Mycoplasmopsis synoviae (strain 53) (Mycoplasma synoviae)).